A 677-amino-acid chain; its full sequence is Pannexin-2 (677 aa).

Residues 11–47 (MATALLAGEKLRELILPGAQDDKAGALAALLLQLKLE) are Cytoplasmic-facing. Residues 48–70 (LPFDRVVTIGTVLVPILLVTLVF) traverse the membrane as a helical segment. Over 71 to 123 (TKNFAEEPIYCYTPHNFTRDQALYARGYCWTELRDALPGVDASLWPSLFEHKF) the chain is Extracellular. The N-linked (GlcNAc...) asparagine glycan is linked to N86. Residues 124–146 (LPYALLAFAAIMYVPALGWEFLA) form a helical membrane-spanning segment. The Cytoplasmic segment spans residues 147–226 (STRLTSELNF…RGRSNFLAKL (80 aa)). The helical transmembrane segment at 227–249 (YLARHVLILLLSAVPISYLCTYY) threads the bilayer. The Extracellular portion of the chain corresponds to 250-292 (ATQKQNEFTCALGASPDGAAGAGPAVRVSCKLPSVQLQRIIAG). A helical transmembrane segment spans residues 293–315 (VDIVLLCVMNLIILVNLIHLFIF). Topologically, residues 316–643 (RKSNFIFDKL…AREEEDGGPR (328 aa)) are cytoplasmic. Disordered stretches follow at residues 393–423 (ATPT…PPVV) and 454–510 (NSKA…KKHA). The span at 492–504 (GPGPAPAPAPPPA) shows a compositional bias: pro residues. S593 bears the Phosphoserine mark.

Belongs to the pannexin family. Homoheptameric. S-palmitoylated in neural stem and progenitor cells. In terms of processing, cleaved by CASP3 and CASP7 during apoptosis. Cleavage has no effect on it function.

It localises to the cell membrane. The protein resides in the golgi apparatus membrane. It is found in the endoplasmic reticulum membrane. The enzyme catalyses ATP(in) = ATP(out). The catalysed reaction is chloride(in) = chloride(out). It catalyses the reaction iodide(out) = iodide(in). It carries out the reaction Na(+)(in) = Na(+)(out). The enzyme catalyses D-gluconate(in) = D-gluconate(out). Its function is as follows. Ion channel with a slight anion preference. Also able to release ATP. Plays a role in regulating neurogenesis and apoptosis in keratinocytes. The sequence is that of Pannexin-2 from Homo sapiens (Human).